A 378-amino-acid chain; its full sequence is Actin-related protein 2/3 complex subunit 1B (378 aa).

WD repeat units follow at residues 8–47 (RFAESITCHAWSPDLSMVALCPNNTEVHIYKSLSQDHWER), 53–92 (KHDQIVSGIDWSSKSNKIVTVSHDRNSYVWSLEGAEWVPT), 97–138 (RLNR…WVSK), 143–182 (RHESSVTSVAWHPNNVLLATTSTDGKCRVFSTFIKGVDTK), 203–242 (LSYSWAFGVKWSPSGNTLAYVGHSSMIYFVDDVGPSPLAQ), 257–295 (ISEKMVIGVGYDSNPMVFAADDTGIWSFIRYIGEKKAAS), and 331–375 (VHDN…QELG). A disordered region spans residues 319–340 (TTANDASDSRGGVHDNSITSIV).

The protein belongs to the WD repeat ARPC1 family. As to quaternary structure, component of the Arp2/3 complex composed of ARP2, ARP3, ARPC1/p41-ARC, ARPC2/p34-ARC, ARPC3/p21-ARC, ARPC4/p20-ARC and ARPC5/p16-ARC. In terms of tissue distribution, expressed at low levels in all tissues with a relatively highest expression in inflorescences.

It localises to the cytoplasm. Its subcellular location is the cytoskeleton. In terms of biological role, functions as a component of the Arp2/3 complex which is involved in regulation of actin polymerization and together with an activating nucleation-promoting factor (NPF) mediates the formation of branched actin networks. Arp2/3 complex plays a critical role in the control of cell morphogenesis via the modulation of cell polarity development. The polypeptide is Actin-related protein 2/3 complex subunit 1B (ARPC1B) (Arabidopsis thaliana (Mouse-ear cress)).